A 140-amino-acid polypeptide reads, in one-letter code: Endoribonuclease YbeY (140 aa).

The Zn(2+) site is built by H101, H105, and H111.

It belongs to the endoribonuclease YbeY family. The cofactor is Zn(2+).

Its subcellular location is the cytoplasm. Single strand-specific metallo-endoribonuclease involved in late-stage 70S ribosome quality control and in maturation of the 3' terminus of the 16S rRNA. The sequence is that of Endoribonuclease YbeY from Aliarcobacter butzleri (strain RM4018) (Arcobacter butzleri).